A 338-amino-acid chain; its full sequence is Aspartate carbamoyltransferase catalytic subunit (338 aa).

Carbamoyl phosphate is bound by residues R59 and T60. K87 is an L-aspartate binding site. 3 residues coordinate carbamoyl phosphate: R109, H142, and Q145. L-aspartate-binding residues include R182 and R253. 2 residues coordinate carbamoyl phosphate: G294 and P295.

It belongs to the aspartate/ornithine carbamoyltransferase superfamily. ATCase family. Heterododecamer (2C3:3R2) of six catalytic PyrB chains organized as two trimers (C3), and six regulatory PyrI chains organized as three dimers (R2).

It carries out the reaction carbamoyl phosphate + L-aspartate = N-carbamoyl-L-aspartate + phosphate + H(+). The protein operates within pyrimidine metabolism; UMP biosynthesis via de novo pathway; (S)-dihydroorotate from bicarbonate: step 2/3. Catalyzes the condensation of carbamoyl phosphate and aspartate to form carbamoyl aspartate and inorganic phosphate, the committed step in the de novo pyrimidine nucleotide biosynthesis pathway. In Prochlorococcus marinus (strain SARG / CCMP1375 / SS120), this protein is Aspartate carbamoyltransferase catalytic subunit.